Reading from the N-terminus, the 283-residue chain is Protein canopy homolog 3 (283 aa).

An N-terminal signal peptide occupies residues 1–35; the sequence is MEPLPEPTSRPRLRPRPRCLLLLPLLLLLLLLLPA. The Saposin B-type domain maps to 55 to 276; sequence SKCEVCKYVA…EGIQKASPLT (222 aa). Asn161 carries an N-linked (GlcNAc...) asparagine glycan. Residues 161 to 187 adopt a coiled-coil conformation; it reads NETSAEVADLKKQCDVLVEEFEEVIED. The interval 223-283 is disordered; that stretch reads KGDTAALGGK…PLTHSPPDEL (61 aa).

Belongs to the canopy family. As to quaternary structure, interacts with HSP90B1; this interaction is disrupted in the presence of ATP. Interacts with TLR1, TLR2, TLR4 and TLR9.

It is found in the endoplasmic reticulum. In terms of biological role, toll-like receptor (TLR)-specific co-chaperone for HSP90B1. Required for proper TLR folding, except that of TLR3, and hence controls TLR exit from the endoplasmic reticulum. Consequently, required for both innate and adaptive immune responses. The protein is Protein canopy homolog 3 (CNPY3) of Sus scrofa (Pig).